The chain runs to 79 residues: Protein VdcD (79 aa).

Functionally, involved in the non-oxidative decarboxylation and detoxification of phenolic derivatives under both aerobic and anaerobic conditions, however the precise biochemical function of VdcD in metabolism of phenolic acid is unknown. The sequence is that of Protein VdcD from Streptomyces sp. (strain D7).